We begin with the raw amino-acid sequence, 187 residues long: Phosphoheptose isomerase (187 aa).

The 154-residue stretch at 34-187 (CIEALKNQKK…ILCSLIDESF (154 aa)) folds into the SIS domain. A substrate-binding site is contributed by 49–51 (NGG). Residues His58 and Glu62 each coordinate Zn(2+). Residues Glu62, 91-92 (ND), 117-119 (STS), Ser122, and Gln169 each bind substrate. Zn(2+) contacts are provided by Gln169 and His177.

Belongs to the SIS family. GmhA subfamily. In terms of assembly, homotetramer. Zn(2+) is required as a cofactor.

The protein resides in the cytoplasm. It catalyses the reaction 2 D-sedoheptulose 7-phosphate = D-glycero-alpha-D-manno-heptose 7-phosphate + D-glycero-beta-D-manno-heptose 7-phosphate. The protein operates within carbohydrate biosynthesis; D-glycero-D-manno-heptose 7-phosphate biosynthesis; D-glycero-alpha-D-manno-heptose 7-phosphate and D-glycero-beta-D-manno-heptose 7-phosphate from sedoheptulose 7-phosphate: step 1/1. In terms of biological role, catalyzes the isomerization of sedoheptulose 7-phosphate in D-glycero-D-manno-heptose 7-phosphate. The polypeptide is Phosphoheptose isomerase (Nitratiruptor sp. (strain SB155-2)).